Here is a 298-residue protein sequence, read N- to C-terminus: Ribose-phosphate pyrophosphokinase (298 aa).

Residues 33-35 and 91-92 each bind ATP; these read DGE and RQ. Mg(2+) contacts are provided by His125 and Asp164. Lys187 is an active-site residue. D-ribose 5-phosphate contacts are provided by Arg189 and Asp224.

The protein belongs to the ribose-phosphate pyrophosphokinase family. Class III (archaeal) subfamily. Mg(2+) serves as cofactor.

It is found in the cytoplasm. The enzyme catalyses D-ribose 5-phosphate + ATP = 5-phospho-alpha-D-ribose 1-diphosphate + AMP + H(+). The protein operates within metabolic intermediate biosynthesis; 5-phospho-alpha-D-ribose 1-diphosphate biosynthesis; 5-phospho-alpha-D-ribose 1-diphosphate from D-ribose 5-phosphate (route I): step 1/1. In terms of biological role, involved in the biosynthesis of the central metabolite phospho-alpha-D-ribosyl-1-pyrophosphate (PRPP) via the transfer of pyrophosphoryl group from ATP to 1-hydroxyl of ribose-5-phosphate (Rib-5-P). In Methanobrevibacter smithii (strain ATCC 35061 / DSM 861 / OCM 144 / PS), this protein is Ribose-phosphate pyrophosphokinase.